The primary structure comprises 221 residues: 3-dehydroquinate dehydratase (221 aa).

Residues 33–35 (EIR) and Arg-63 contribute to the 3-dehydroquinate site. His-118 serves as the catalytic Proton donor/acceptor. Catalysis depends on Lys-144, which acts as the Schiff-base intermediate with substrate. Residues Arg-181, Thr-200, and Gln-204 each contribute to the 3-dehydroquinate site.

Belongs to the type-I 3-dehydroquinase family. Homodimer.

It catalyses the reaction 3-dehydroquinate = 3-dehydroshikimate + H2O. It participates in metabolic intermediate biosynthesis; chorismate biosynthesis; chorismate from D-erythrose 4-phosphate and phosphoenolpyruvate: step 3/7. Involved in the third step of the chorismate pathway, which leads to the biosynthesis of aromatic amino acids. Catalyzes the cis-dehydration of 3-dehydroquinate (DHQ) and introduces the first double bond of the aromatic ring to yield 3-dehydroshikimate. In Methanothermobacter thermautotrophicus (strain ATCC 29096 / DSM 1053 / JCM 10044 / NBRC 100330 / Delta H) (Methanobacterium thermoautotrophicum), this protein is 3-dehydroquinate dehydratase.